The chain runs to 348 residues: Papaya proteinase 4 (348 aa).

The N-terminal stretch at 1–18 (MAIICSFSKLLFVAICLF) is a signal peptide. The propeptide at 19-132 (GHMSLSYCDF…EEFVNEDIVD (114 aa)) is activation peptide. Intrachain disulfides connect Cys154–Cys195, Cys188–Cys227, and Cys285–Cys336. Cys157 is an active-site residue. Active-site residues include His291 and Asn311.

This sequence belongs to the peptidase C1 family.

It catalyses the reaction Preferential cleavage: Gly-|-Xaa, in proteins and in small molecule substrates.. Not inhibited by cystatin. Functionally, thiol protease with a substrate specificity very different from the other thiol proteases. This is Papaya proteinase 4 from Carica papaya (Papaya).